Here is a 109-residue protein sequence, read N- to C-terminus: Sulredoxin (109 aa).

Positions 3–107 (WKRTISAKAL…IRDNNGWIEV (105 aa)) constitute a Rieske domain. Residues Cys-43, His-45, Cys-62, and His-65 each coordinate [2Fe-2S] cluster.

As to quaternary structure, homooligomeric. [2Fe-2S] cluster is required as a cofactor.

It is found in the cytoplasm. Its function is as follows. Not yet known. This is Sulredoxin (sdx) from Sulfurisphaera tokodaii (strain DSM 16993 / JCM 10545 / NBRC 100140 / 7) (Sulfolobus tokodaii).